The sequence spans 222 residues: tRNA (guanine-N(1)-)-methyltransferase (222 aa).

S-adenosyl-L-methionine contacts are provided by residues Gly-111 and 131–136 (LGNYVI).

It belongs to the RNA methyltransferase TrmD family. As to quaternary structure, homodimer.

The protein localises to the cytoplasm. It carries out the reaction guanosine(37) in tRNA + S-adenosyl-L-methionine = N(1)-methylguanosine(37) in tRNA + S-adenosyl-L-homocysteine + H(+). In terms of biological role, specifically methylates guanosine-37 in various tRNAs. The polypeptide is tRNA (guanine-N(1)-)-methyltransferase (Leptospira borgpetersenii serovar Hardjo-bovis (strain JB197)).